A 290-amino-acid polypeptide reads, in one-letter code: Malonyl-[acyl-carrier protein] O-methyltransferase (290 aa).

It belongs to the methyltransferase superfamily.

It carries out the reaction malonyl-[ACP] + S-adenosyl-L-methionine = malonyl-[ACP] methyl ester + S-adenosyl-L-homocysteine. Its pathway is cofactor biosynthesis; biotin biosynthesis. Its function is as follows. Converts the free carboxyl group of a malonyl-thioester to its methyl ester by transfer of a methyl group from S-adenosyl-L-methionine (SAM). It allows to synthesize pimeloyl-ACP via the fatty acid synthetic pathway. This is Malonyl-[acyl-carrier protein] O-methyltransferase from Gallionella capsiferriformans (strain ES-2) (Gallionella ferruginea capsiferriformans (strain ES-2)).